Consider the following 718-residue polypeptide: Calpastatin (718 aa).

2 disordered regions span residues 1 to 189 (MNPA…MSST) and 210 to 238 (EKKT…LSSD). Residues 20–29 (PHSKKRHRRQ) are compositionally biased toward basic residues. Composition is skewed to basic and acidic residues over residues 30–61 (DAKT…EHTK) and 68–104 (HASD…KPQD). Lysine 32 participates in a covalent cross-link: Glycyl lysine isopeptide (Lys-Gly) (interchain with G-Cter in SUMO2). Lysine 49 is modified (N6-acetyllysine). Phosphoserine is present on serine 86. The segment covering 114 to 124 (AAGTTAAPGKA) has biased composition (low complexity). Residues serine 133, serine 222, and serine 243 each carry the phosphoserine modification. Residues 170–222 (TQEDSTAYTGPEISDPMSSTYIEELGKREVTIPPKYRELLEKKTGVAGPPPDS) form an Inhibitory domain 1 repeat. 2 disordered regions span residues 266 to 291 (ESAK…AMSD) and 320 to 509 (EAKR…QLPA). At serine 290 the chain carries Blocked amino end (Ser); in form erythrocyte. The stretch at 307 to 359 (EPELDLSSIKEVAEAKRKEEKVEKCGEDDETVPAEYRLKPATDKDGKPLLPEP) is one Inhibitory domain 2 repeat. Basic and acidic residues-rich tracts occupy residues 320–331 (EAKRKEEKVEKC), 342–377 (YRLK…ELSK), and 384–399 (SNEK…EESK). Phosphoserine is present on residues serine 367, serine 369, and serine 376. Residues 400–411 (AAVPAPVAEAVP) are compositionally biased toward low complexity. A Phosphoserine modification is found at serine 444. Residues 446–496 (GRKEADPEEGKPVADKIKEKSKEEEREKLGEKEETIPPDYRLEEAKDKDGK) are compositionally biased toward basic and acidic residues. The Inhibitory domain 3 repeat unit spans residues 450–503 (ADPEEGKPVADKIKEKSKEEEREKLGEKEETIPPDYRLEEAKDKDGKPLLPSEP). A phosphoserine mark is found at serine 520, serine 531, serine 579, and serine 581. Residues 543-718 (VSEVVSQSPA…KPKANEKNAS (176 aa)) are disordered. Residues 566-579 (PSNKELDDALDKLS) show a composition bias toward basic and acidic residues. Residues 587–640 (PDPDENKPMEDKVKERAKKEHKDKLGERDDTIPPEYRHLLDQGEQDKPEKPPTK) form an Inhibitory domain 4 repeat. Composition is skewed to basic and acidic residues over residues 587 to 650 (PDPD…KPAG) and 706 to 718 (ETSK…KNAS).

Belongs to the protease inhibitor I27 (calpastatin) family.

In terms of biological role, specific inhibition of calpain (calcium-dependent cysteine protease). Plays a key role in postmortem tenderization of meat and have been proposed to be involved in muscle protein degradation in living tissue. The chain is Calpastatin (CAST) from Oryctolagus cuniculus (Rabbit).